The following is a 199-amino-acid chain: Small ribosomal subunit protein uS4 (199 aa).

In terms of domain architecture, S4 RNA-binding spans 106–170 (RRLQTIVFRK…SPVANELHPI (65 aa)). The segment at 177–199 (PAQRSAEMKEGQGEASEEGETDE) is disordered.

It belongs to the universal ribosomal protein uS4 family. As to quaternary structure, part of the 30S ribosomal subunit. Contacts protein S5. The interaction surface between S4 and S5 is involved in control of translational fidelity.

Its function is as follows. One of the primary rRNA binding proteins, it binds directly to 16S rRNA where it nucleates assembly of the body of the 30S subunit. Functionally, with S5 and S12 plays an important role in translational accuracy. The chain is Small ribosomal subunit protein uS4 from Thermoplasma acidophilum (strain ATCC 25905 / DSM 1728 / JCM 9062 / NBRC 15155 / AMRC-C165).